The primary structure comprises 476 residues: Bifunctional protein HldE (476 aa).

The segment at Met1–Thr318 is ribokinase. Asn195–Glu198 provides a ligand contact to ATP. Asp264 is a catalytic residue. Residues Met344 to Gly476 are cytidylyltransferase.

It in the N-terminal section; belongs to the carbohydrate kinase PfkB family. The protein in the C-terminal section; belongs to the cytidylyltransferase family. In terms of assembly, homodimer.

The catalysed reaction is D-glycero-beta-D-manno-heptose 7-phosphate + ATP = D-glycero-beta-D-manno-heptose 1,7-bisphosphate + ADP + H(+). It catalyses the reaction D-glycero-beta-D-manno-heptose 1-phosphate + ATP + H(+) = ADP-D-glycero-beta-D-manno-heptose + diphosphate. The protein operates within nucleotide-sugar biosynthesis; ADP-L-glycero-beta-D-manno-heptose biosynthesis; ADP-L-glycero-beta-D-manno-heptose from D-glycero-beta-D-manno-heptose 7-phosphate: step 1/4. It participates in nucleotide-sugar biosynthesis; ADP-L-glycero-beta-D-manno-heptose biosynthesis; ADP-L-glycero-beta-D-manno-heptose from D-glycero-beta-D-manno-heptose 7-phosphate: step 3/4. Catalyzes the phosphorylation of D-glycero-D-manno-heptose 7-phosphate at the C-1 position to selectively form D-glycero-beta-D-manno-heptose-1,7-bisphosphate. Its function is as follows. Catalyzes the ADP transfer from ATP to D-glycero-beta-D-manno-heptose 1-phosphate, yielding ADP-D-glycero-beta-D-manno-heptose. The sequence is that of Bifunctional protein HldE from Vibrio cholerae serotype O1 (strain M66-2).